A 259-amino-acid chain; its full sequence is MAVGGQKKVTKGGKKGGKKKTADPFSKKEWYDIKAPAMFPKRTCARTLVTRTQGTRIASEALKGRVVTLSLGDLSEKNEEVFRKFKLQIEDVQGRHCLTNFHGLELTRDKLCSVVVKWRSTIEAHVDVKTTDGYLLRFFIITFTPSVPRSERLHSYAQTTRIKRIRARLVEIIQQEVSTCDLKEVVNKLIPDSIAQDARKAASWIYPLGETFIRKVKVLKRPKADLARLMELHGESKSTAPGETVSRPDHYEPPKVDSV.

2 disordered regions span residues 1 to 23 and 235 to 259; these read MAVG…KTAD and ESKS…VDSV. Positions 8 to 19 are enriched in basic residues; that stretch reads KVTKGGKKGGKK. Residues 246–259 show a composition bias toward basic and acidic residues; the sequence is SRPDHYEPPKVDSV.

The protein belongs to the eukaryotic ribosomal protein eS1 family. As to quaternary structure, component of the small ribosomal subunit. Mature ribosomes consist of a small (40S) and a large (60S) subunit. The 40S subunit contains about 33 different proteins and 1 molecule of RNA (18S). The 60S subunit contains about 49 different proteins and 3 molecules of RNA (28S, 5.8S and 5S).

It localises to the cytoplasm. The sequence is that of Small ribosomal subunit protein eS1 from Schistosoma japonicum (Blood fluke).